Consider the following 544-residue polypeptide: Serine/threonine-protein kinase PAK 3 (544 aa).

A disordered region spans residues 1-73; sequence MSDSLDNEEK…EKERPEISLP (73 aa). Phosphoserine is present on residues S2 and S4. The span at 18 to 32 shows a compositional bias: polar residues; sequence MNSNNRDSSALNHSS. S50 carries the phosphoserine; by autocatalysis modification. The span at 63–73 shows a compositional bias: basic and acidic residues; the sequence is KEKERPEISLP. Residues 65–108 are GTPase-binding; sequence KERPEISLPSDFEHTIHVGFDAVTGEFTGIPEQWARLLQTSNIT. Residues 65 to 135 are autoregulatory region; sequence KERPEISLPS…YDSKETVNNQ (71 aa). Residues 70–83 enclose the CRIB domain; sequence ISLPSDFEHTIHVG. A linker region spans residues 84-267; it reads FDAVTGEFTG…IVSVGDPKKK (184 aa). Residue S139 is modified to Phosphoserine; by autocatalysis. Disordered stretches follow at residues 156–197 and 213–248; these read SNTK…RPEH and PAAP…KMTD. S171 carries the post-translational modification Phosphoserine. A compositionally biased stretch (acidic residues) spans 171–186; that stretch reads SEEEDEEEEEEEDDNE. The segment covering 224–235 has biased composition (polar residues); it reads SAENANSSTLYR. The Protein kinase domain occupies 268 to 519; that stretch reads YTRFEKIGQG…AKELLQHPFL (252 aa). ATP contacts are provided by residues 274-282 and K297; that span reads IGQGASGTV. D387 functions as the Proton acceptor in the catalytic mechanism. The residue at position 421 (T421) is a Phosphothreonine; by autocatalysis.

It belongs to the protein kinase superfamily. STE Ser/Thr protein kinase family. STE20 subfamily. Interacts tightly with GTP-bound but not GDP-bound CDC42/p21 and RAC1. Shows highly specific binding to the SH3 domains of phospholipase C-gamma and of adapter protein NCK. Interacts with the C-terminal of APP. Interacts with ARHGEF6 and ARHGEF7. Interacts with GIT1 and GIT2. Mg(2+) serves as cofactor. Autophosphorylated when activated by CDC42/p21. In terms of processing, neddylated. As to expression, detected at high levels in the brain and at low levels in the testis.

It is found in the cytoplasm. The enzyme catalyses L-seryl-[protein] + ATP = O-phospho-L-seryl-[protein] + ADP + H(+). It catalyses the reaction L-threonyl-[protein] + ATP = O-phospho-L-threonyl-[protein] + ADP + H(+). Activated by binding small G proteins. Binding of GTP-bound CDC42 or RAC1 to the autoregulatory region releases monomers from the autoinhibited dimer, enables phosphorylation of Thr-421 and allows the kinase domain to adopt an active structure. In terms of biological role, serine/threonine protein kinase that plays a role in a variety of different signaling pathways including cytoskeleton regulation, cell migration, or cell cycle regulation. Plays a role in dendrite spine morphogenesis as well as synapse formation and plasticity. Acts as a downstream effector of the small GTPases CDC42 and RAC1. Activation by the binding of active CDC42 and RAC1 results in a conformational change and a subsequent autophosphorylation on several serine and/or threonine residues. Phosphorylates MAPK4 and MAPK6 and activates the downstream target MAPKAPK5, a regulator of F-actin polymerization and cell migration. Additionally, phosphorylates TNNI3/troponin I to modulate calcium sensitivity and relaxation kinetics of thin myofilaments. May also be involved in early neuronal development. In hippocampal neurons, necessary for the formation of dendritic spines and excitatory synapses; this function is dependent on kinase activity and may be exerted by the regulation of actomyosin contractility through the phosphorylation of myosin II regulatory light chain (MLC). The protein is Serine/threonine-protein kinase PAK 3 (Pak3) of Rattus norvegicus (Rat).